The sequence spans 155 residues: Large ribosomal subunit protein eL24 (155 aa).

The tract at residues 92 to 155 is disordered; that stretch reads AKRNMKPEVR…KAAPRVGGKR (64 aa). Positions 96-117 are enriched in basic and acidic residues; it reads MKPEVRKAQREQAIKQAKEQKK. Positions 124-133 are enriched in low complexity; it reads KTTAPPTKGK.

This sequence belongs to the eukaryotic ribosomal protein eL24 family.

This Plutella xylostella (Diamondback moth) protein is Large ribosomal subunit protein eL24 (RpL24).